Here is a 565-residue protein sequence, read N- to C-terminus: MVAEDAPVRGTCRVLFRTTTLLFLCTLLSLSISILYESLITQNQIMSQAGSTGSNSGLGSITDLLNNILSVANQIIYNSAVALPLQLDTLESTLLTAFKSLQTSDKLEQNCSWGAALINDNRYINGINQFYFSIAEGRNLTLGPLLNILSFIPTATTPEGCTRIPSFSLTKTHWCYTHNVILNGCQDHVSSNQFVSMGIIEPTSAGFPSFRTLKTLYLSDGVNRKSCSISTVPGGCMMYCFVSTQPERDDYFSAAPPEQRIIIMYYNDTIVERIINPPGVLDVWATLNPGTGSGVYYLGWVLFPIYGGVIKDTSLWNSQANKYFIPQMVAALCSQNQATQVQNAKSSYYSSWFGNRMIQSGILACPLQQDLTNECLVLPFSNDQVLMGAEGRLYMYGDSVYYYQRSNSWWPMTMLYKVTITFTNGQPSAISAQNVPTQQVPRPGTGDCSATNRCPGFCLTGVYADAWLLTNPSSTSTFGSEATFTGSYLNTATQRINPTMYIANNTQIISSQQFGSSGQEAAYGHTTCFRDTGSVMVYCIYIIELSSSLLGQFQIVPFIRQVTLS.

Residues 1–19 (MVAEDAPVRGTCRVLFRTT) lie on the Intravirion side of the membrane. The helical transmembrane segment at 20 to 40 (TLLFLCTLLSLSISILYESLI) threads the bilayer. The Virion surface segment spans residues 41–565 (TQNQIMSQAG…VPFIRQVTLS (525 aa)). 2 N-linked (GlcNAc...) asparagine; by host glycosylation sites follow: Asn110 and Asn139. 3 cysteine pairs are disulfide-bonded: Cys161/Cys185, Cys175/Cys236, and Cys227/Cys240. The tract at residues 223 to 228 (NRKSCS) is involved in neuraminidase activity. N-linked (GlcNAc...) asparagine; by host glycosylation is present at Asn267. 3 disulfide bridges follow: Cys333/Cys454, Cys365/Cys375, and Cys448/Cys458. N-linked (GlcNAc...) asparagine; by host glycosylation is present at Asn504. Cysteines 528 and 539 form a disulfide.

Belongs to the paramyxoviruses hemagglutinin-neuraminidase family. Homotetramer; composed of disulfide-linked homodimers. Interacts with F protein trimer.

The protein localises to the virion membrane. The protein resides in the host cell membrane. It catalyses the reaction Hydrolysis of alpha-(2-&gt;3)-, alpha-(2-&gt;6)-, alpha-(2-&gt;8)- glycosidic linkages of terminal sialic acid residues in oligosaccharides, glycoproteins, glycolipids, colominic acid and synthetic substrates.. In terms of biological role, attaches the virus to sialic acid-containing cell receptors and thereby initiating infection. Binding of HN protein to the receptor induces a conformational change that allows the F protein to trigger virion/cell membranes fusion. Functionally, neuraminidase activity ensures the efficient spread of the virus by dissociating the mature virions from the neuraminic acid containing glycoproteins. The sequence is that of Hemagglutinin-neuraminidase (HN) from Canis lupus familiaris (Dog).